A 613-amino-acid polypeptide reads, in one-letter code: DNA repair and telomere maintenance protein nbs1 (613 aa).

The FHA domain maps to 23–86 (YIVGRNVSDD…FGTKVNEKVV (64 aa)). 2 consecutive BRCT domains span residues 107–186 (FTIN…YLST) and 228–302 (GFSC…KIII). A Phosphoserine modification is found at S355. Disordered regions lie at residues 381-428 (KEPE…GQGK) and 546-613 (TEVF…KFHF). A compositionally biased stretch (polar residues) spans 387 to 399 (LSNQSNNGSAQNK). The segment covering 400-409 (KSGDNSEKTK) has biased composition (basic and acidic residues). Residues 574 to 592 (SSDKSGKSSISKKSSNSFK) show a composition bias toward low complexity. Residues 611–613 (FHF) carry the FxF/Y motif motif.

Belongs to the Nibrin family. In terms of assembly, component of the MRN complex composed of two heterodimers rad32 and rad50 associated with a single nbs1. Interacts with (phosphorylated) ctp1/CtIP. Interacts (via FxF/Y motif) with tel1/atm.

It is found in the nucleus. It localises to the chromosome. Its subcellular location is the telomere. In terms of biological role, component of the MRN complex, which plays a central role in double-strand break (DSB) repair, DNA recombination, maintenance of telomere integrity and meiosis. The MRN complex is involved in the repair of DNA double-strand breaks (DSBs) via homologous recombination (HR), an error-free mechanism which primarily occurs during S and G2 phases. The complex (1) mediates the end resection of damaged DNA, which generates proper single-stranded DNA, a key initial steps in HR, and is (2) required for the recruitment of other repair factors and efficient activation of tel1/atm upon DNA damage. The MRN complex possesses single-strand endonuclease activity and double-strand-specific 3'-5' exonuclease activity, which are provided by MRE11, to initiate end resection, which is required for single-strand invasion and recombination. Within the MRN complex, nbs1 acts as a protein-protein adapter, which specifically recognizes and binds phosphorylated proteins, promoting their recruitment to DNA damage sites. Recruits rad32 and rad50 components of the MRN complex to DSBs in response to DNA damage. Promotes the recruitment of tel1/atm to the DNA damage sites, activating tel1/atm function. Mediates the recruitment of phosphorylated ctp1/CtIP to DSBs, leading to cooperation between the MRN complex and ctp1/CtIP to initiate end resection. The sequence is that of DNA repair and telomere maintenance protein nbs1 from Schizosaccharomyces pombe (strain 972 / ATCC 24843) (Fission yeast).